A 190-amino-acid chain; its full sequence is Nucleoside triphosphate pyrophosphatase (190 aa).

Asp-69 (proton acceptor) is an active-site residue.

Belongs to the Maf family. It depends on a divalent metal cation as a cofactor.

It is found in the cytoplasm. It carries out the reaction a ribonucleoside 5'-triphosphate + H2O = a ribonucleoside 5'-phosphate + diphosphate + H(+). The enzyme catalyses a 2'-deoxyribonucleoside 5'-triphosphate + H2O = a 2'-deoxyribonucleoside 5'-phosphate + diphosphate + H(+). Nucleoside triphosphate pyrophosphatase. May have a dual role in cell division arrest and in preventing the incorporation of modified nucleotides into cellular nucleic acids. This chain is Nucleoside triphosphate pyrophosphatase, found in Helicobacter pylori (strain G27).